The following is a 294-amino-acid chain: ATP synthase gamma chain (294 aa).

The protein belongs to the ATPase gamma chain family. As to quaternary structure, F-type ATPases have 2 components, CF(1) - the catalytic core - and CF(0) - the membrane proton channel. CF(1) has five subunits: alpha(3), beta(3), gamma(1), delta(1), epsilon(1). CF(0) has three main subunits: a, b and c.

It is found in the cell inner membrane. In terms of biological role, produces ATP from ADP in the presence of a proton gradient across the membrane. The gamma chain is believed to be important in regulating ATPase activity and the flow of protons through the CF(0) complex. This chain is ATP synthase gamma chain, found in Paraburkholderia phytofirmans (strain DSM 17436 / LMG 22146 / PsJN) (Burkholderia phytofirmans).